The sequence spans 352 residues: S-adenosylmethionine:tRNA ribosyltransferase-isomerase (352 aa).

Belongs to the QueA family. In terms of assembly, monomer.

The protein resides in the cytoplasm. The catalysed reaction is 7-aminomethyl-7-carbaguanosine(34) in tRNA + S-adenosyl-L-methionine = epoxyqueuosine(34) in tRNA + adenine + L-methionine + 2 H(+). It participates in tRNA modification; tRNA-queuosine biosynthesis. Transfers and isomerizes the ribose moiety from AdoMet to the 7-aminomethyl group of 7-deazaguanine (preQ1-tRNA) to give epoxyqueuosine (oQ-tRNA). This is S-adenosylmethionine:tRNA ribosyltransferase-isomerase from Allorhizobium ampelinum (strain ATCC BAA-846 / DSM 112012 / S4) (Agrobacterium vitis (strain S4)).